We begin with the raw amino-acid sequence, 219 residues long: 2-hydroxy-3-keto-5-methylthiopentenyl-1-phosphate phosphatase (219 aa).

Belongs to the HAD-like hydrolase superfamily. MtnX family.

It carries out the reaction 2-hydroxy-5-methylsulfanyl-3-oxopent-1-enyl phosphate + H2O = 1,2-dihydroxy-5-(methylsulfanyl)pent-1-en-3-one + phosphate. Its pathway is amino-acid biosynthesis; L-methionine biosynthesis via salvage pathway; L-methionine from S-methyl-5-thio-alpha-D-ribose 1-phosphate: step 4/6. Functionally, dephosphorylates 2-hydroxy-3-keto-5-methylthiopentenyl-1-phosphate (HK-MTPenyl-1-P) yielding 1,2-dihydroxy-3-keto-5-methylthiopentene (DHK-MTPene). The chain is 2-hydroxy-3-keto-5-methylthiopentenyl-1-phosphate phosphatase from Bacillus cereus (strain AH187).